The chain runs to 179 residues: Monothiol glutaredoxin-S12, chloroplastic (179 aa).

The transit peptide at 1–61 (MVAATVNLAN…WPPLRCSSVK (61 aa)) directs the protein to the chloroplast. At Ala-62 the chain carries N-acetylalanine. One can recognise a Glutaredoxin domain in the interval 75-176 (EETVKTTVAE…AILAEANGKN (102 aa)). Cys-95 provides a ligand contact to [2Fe-2S] cluster.

It belongs to the glutaredoxin family. CPYC subfamily.

It localises to the plastid. The protein resides in the chloroplast. In terms of biological role, may only reduce GSH-thiol disulfides, but not protein disulfides. This Arabidopsis thaliana (Mouse-ear cress) protein is Monothiol glutaredoxin-S12, chloroplastic (GRXS12).